Consider the following 91-residue polypeptide: Large ribosomal subunit protein eL43 (91 aa).

The C4-type zinc-finger motif lies at 39–60 (CSFCGKDAVRRSSVGIWKCNGC).

It belongs to the eukaryotic ribosomal protein eL43 family.

This is Large ribosomal subunit protein eL43 (rpl37A) from Dictyostelium discoideum (Social amoeba).